A 662-amino-acid chain; its full sequence is Protein Aster-C (662 aa).

The tract at residues 1-34 (MEGAPTVRQVMNEGDSSLATELQEDVEENPSPTV) is disordered. In terms of domain architecture, GRAM spans 69–136 (EEYRRQFTHL…KNITFMTKEK (68 aa)). Disordered stretches follow at residues 212 to 237 (SIED…EKLS) and 250 to 284 (VSET…LPTL). Residues 265 to 276 (LGKEESQNEKQT) are compositionally biased toward basic and acidic residues. The region spanning 326 to 497 (HGRLFINRIF…DLLIEESILN (172 aa)) is the VASt domain. Residues 557-577 (LIVVMSIFVLLLVLLNVTLFL) traverse the membrane as a helical segment.

It localises to the endoplasmic reticulum membrane. Its subcellular location is the cell membrane. Functionally, cholesterol transporter that mediates non-vesicular transport of cholesterol from the plasma membrane (PM) to the endoplasmic reticulum (ER). Contains unique domains for binding cholesterol and the PM, thereby serving as a molecular bridge for the transfer of cholesterol from the PM to the ER. Plays a crucial role in cholesterol homeostasis and has the unique ability to localize to the PM based on the level of membrane cholesterol. In lipid-poor conditions localizes to the ER membrane and in response to excess cholesterol in the PM is recruited to the endoplasmic reticulum-plasma membrane contact sites (EPCS) which is mediated by the GRAM domain. At the EPCS, the sterol-binding VASt/ASTER domain binds to the cholesterol in the PM and facilitates its transfer from the PM to ER. The protein is Protein Aster-C (GRAMD1C) of Pongo abelii (Sumatran orangutan).